Reading from the N-terminus, the 145-residue chain is Large ribosomal subunit protein bL19 (145 aa).

The protein belongs to the bacterial ribosomal protein bL19 family.

Its function is as follows. This protein is located at the 30S-50S ribosomal subunit interface and may play a role in the structure and function of the aminoacyl-tRNA binding site. The chain is Large ribosomal subunit protein bL19 from Brucella abortus (strain S19).